Reading from the N-terminus, the 123-residue chain is Small ribosomal subunit protein uS12cz/uS12cy (123 aa).

Belongs to the universal ribosomal protein uS12 family. In terms of assembly, part of the 30S ribosomal subunit.

The protein localises to the plastid. It is found in the chloroplast. Functionally, with S4 and S5 plays an important role in translational accuracy. Located at the interface of the 30S and 50S subunits. The protein is Small ribosomal subunit protein uS12cz/uS12cy (rps12-A) of Nymphaea alba (White water-lily).